The sequence spans 317 residues: Lactamase-like protein adaB (317 aa).

His97, His99, Asp101, and His102 together coordinate Zn(2+). Asp101 (proton donor/acceptor) is an active-site residue.

This sequence belongs to the metallo-beta-lactamase superfamily. Zn(2+) is required as a cofactor.

The enzyme catalyses 3-(2,4-dioxopentyl)-2,3,6,8,9-pentahydroxy-1-oxo-1,2,3,4-tetrahydroanthracene-2-carboxyl-[ACP] = 2-acetyl-3,4a,8,10,11,12a-hexahydroxy-1,4,4a,5,12,12a-hexahydrotetracene-1,12-dione + holo-[ACP] + H(+). The protein operates within secondary metabolite biosynthesis. Functionally, lactamase-like protein; part of the gene cluster that mediates the biosynthesis of the linear tetracyclic TAN-1612 neuropeptide Y receptor antagonist. The decaketide backbone of TAN-1612 is synthesized by the non-reducing polyketide synthase adaA via condensation of one acetyl-CoA starter unit with 9 malonyl-CoA units. The FAD-dependent monooxygenase adaC then performs hydroxylation at C2 while the polaketide chain is still attached to the NRPKS adaA. The alpha-hydroxylation step at C2 appears to be crucial for the following C18-C1 Claisen cyclization and release of the C9-hydroxyl version of TAN-1612 from the NRPKS adaA, two steps performed by the lactamase-like protein adaB. Finally, the O-methyltransferase adaD performs the C9 O-methylation to complete the biosynthesis of TAN-1612. The polypeptide is Lactamase-like protein adaB (Aspergillus niger (strain ATCC MYA-4892 / CBS 513.88 / FGSC A1513)).